Reading from the N-terminus, the 201-residue chain is Recombination protein RecR (201 aa).

Residues 57-72 (CADCRTFTEQEHCTIC) form a C4-type zinc finger. The region spanning 81-176 (GQICVVESPA…LASRIAHGVP (96 aa)) is the Toprim domain.

The protein belongs to the RecR family.

Functionally, may play a role in DNA repair. It seems to be involved in an RecBC-independent recombinational process of DNA repair. It may act with RecF and RecO. The polypeptide is Recombination protein RecR (Yersinia pestis bv. Antiqua (strain Antiqua)).